Here is a 474-residue protein sequence, read N- to C-terminus: MILSSSLRPTILVVGDLMIDHYIWGECERISPEAPVQVIDVKRETKTLGGACNVMSNLIALEASVLSCGVVGEDLAGRELLGFLQELGMESKGIITQKGRPTTQKSRIIASNQQVVRVDWENKSPISEESEEAMIAYIRSKLSLCDAVILSDYGKGVLTPRVCQTIIQMAKTLQKRVLVDPKGRDYSKYRGASLLTPNKKEAKEATGIEINDEASLKKALECLKKECELEFSVITLSEDGIGIFDQALERIPTIAQEVYDVTGAGDTVIASLAYGLSLGYPLRECALFANAAAAVVVGKIGSATATHGEIAEYLHSSHQGESQERILSRDSIQKIAKQWRSRGRKIVFTNGCFDILHAGHVQYLQKAKACGDCLIVGLNSDASVRRLKGELRPINSQEDRALVLSGLEAVDYVVVFDEETPYELIRAIEPDVLVKGGDYEGKEVVGSDLVKEVKLIEFLEGRSTSAVVKKIQGS.

Residues 1-321 are ribokinase; it reads MILSSSLRPT…EYLHSSHQGE (321 aa). An ATP-binding site is contributed by 198–201; that stretch reads NKKE. D266 is an active-site residue. Residues 348–474 form a cytidylyltransferase region; it reads FTNGCFDILH…SAVVKKIQGS (127 aa).

This sequence in the N-terminal section; belongs to the carbohydrate kinase PfkB family. It in the C-terminal section; belongs to the cytidylyltransferase family. Homodimer.

The enzyme catalyses D-glycero-beta-D-manno-heptose 7-phosphate + ATP = D-glycero-beta-D-manno-heptose 1,7-bisphosphate + ADP + H(+). It carries out the reaction D-glycero-beta-D-manno-heptose 1-phosphate + ATP + H(+) = ADP-D-glycero-beta-D-manno-heptose + diphosphate. Its pathway is nucleotide-sugar biosynthesis; ADP-L-glycero-beta-D-manno-heptose biosynthesis; ADP-L-glycero-beta-D-manno-heptose from D-glycero-beta-D-manno-heptose 7-phosphate: step 1/4. It functions in the pathway nucleotide-sugar biosynthesis; ADP-L-glycero-beta-D-manno-heptose biosynthesis; ADP-L-glycero-beta-D-manno-heptose from D-glycero-beta-D-manno-heptose 7-phosphate: step 3/4. Its function is as follows. Catalyzes the phosphorylation of D-glycero-D-manno-heptose 7-phosphate at the C-1 position to selectively form D-glycero-beta-D-manno-heptose-1,7-bisphosphate. Functionally, catalyzes the ADP transfer from ATP to D-glycero-beta-D-manno-heptose 1-phosphate, yielding ADP-D-glycero-beta-D-manno-heptose. This is Bifunctional protein HldE from Wolinella succinogenes (strain ATCC 29543 / DSM 1740 / CCUG 13145 / JCM 31913 / LMG 7466 / NCTC 11488 / FDC 602W) (Vibrio succinogenes).